The primary structure comprises 236 residues: Purine nucleoside phosphorylase DeoD-type (236 aa).

Residue His5 participates in a purine D-ribonucleoside binding. Residues Gly21, Arg25, Arg44, and 88-91 (RVGT) contribute to the phosphate site. Residues 180-182 (EME) and 204-205 (SD) each bind a purine D-ribonucleoside. Residue Asp205 is the Proton donor of the active site.

It belongs to the PNP/UDP phosphorylase family. As to quaternary structure, homohexamer; trimer of homodimers.

The enzyme catalyses a purine D-ribonucleoside + phosphate = a purine nucleobase + alpha-D-ribose 1-phosphate. The catalysed reaction is a purine 2'-deoxy-D-ribonucleoside + phosphate = a purine nucleobase + 2-deoxy-alpha-D-ribose 1-phosphate. Functionally, catalyzes the reversible phosphorolytic breakdown of the N-glycosidic bond in the beta-(deoxy)ribonucleoside molecules, with the formation of the corresponding free purine bases and pentose-1-phosphate. In Shewanella loihica (strain ATCC BAA-1088 / PV-4), this protein is Purine nucleoside phosphorylase DeoD-type.